Here is a 586-residue protein sequence, read N- to C-terminus: uncharacterized protein (586 aa).

In terms of domain architecture, ABC transmembrane type-1 spans 29 to 312 (YGIAIGSMVV…LARMRISLES (284 aa)). The next 4 helical transmembrane spans lie at 30-50 (GIAIGSMVVVAVMTSASAWIM), 66-86 (VFGVAVTVAIIFAVKGLATYV), 162-184 (MVIQQPLLSLVSAAVGPGAILGV), and 256-276 (IMETLSGFAIAGVIALSGVLV). An ABC transporter domain is found at 346 to 580 (IRFKDVNFSY…DGVYRRLYEL (235 aa)). 379 to 386 (GPSGAGKS) provides a ligand contact to ATP.

Belongs to the ABC transporter superfamily.

The protein resides in the cell membrane. This is an uncharacterized protein from Sinorhizobium fredii (strain NBRC 101917 / NGR234).